A 303-amino-acid polypeptide reads, in one-letter code: Probable meiosis-specific protein SPO11 homolog (303 aa).

Residues 1–96 enclose the Topo IIA-type catalytic domain; that stretch reads MALAPTSSAI…LGVRNTLKGI (96 aa). Tyrosine 57 acts as the O-(5'-phospho-DNA)-tyrosine intermediate in catalysis. Positions 144 and 196 each coordinate Mg(2+).

It belongs to the TOP6A family. Mg(2+) is required as a cofactor.

It is found in the nucleus. It catalyses the reaction ATP-dependent breakage, passage and rejoining of double-stranded DNA.. Required for meiotic recombination. Mediates DNA cleavage that forms the double-strand breaks (DSB) that initiate meiotic recombination. This Encephalitozoon cuniculi (strain GB-M1) (Microsporidian parasite) protein is Probable meiosis-specific protein SPO11 homolog (SPO11).